Here is a 330-residue protein sequence, read N- to C-terminus: Ribosomal RNA small subunit methyltransferase H (330 aa).

S-adenosyl-L-methionine-binding positions include 50–52, Asp69, Leu103, Asp117, and Gln124; that span reads GGH.

This sequence belongs to the methyltransferase superfamily. RsmH family.

The protein localises to the cytoplasm. The catalysed reaction is cytidine(1402) in 16S rRNA + S-adenosyl-L-methionine = N(4)-methylcytidine(1402) in 16S rRNA + S-adenosyl-L-homocysteine + H(+). In terms of biological role, specifically methylates the N4 position of cytidine in position 1402 (C1402) of 16S rRNA. In Saccharopolyspora erythraea (strain ATCC 11635 / DSM 40517 / JCM 4748 / NBRC 13426 / NCIMB 8594 / NRRL 2338), this protein is Ribosomal RNA small subunit methyltransferase H.